Here is a 115-residue protein sequence, read N- to C-terminus: Ribonuclease P protein component 4 (115 aa).

Zn(2+)-binding residues include Cys66, Cys69, Cys96, and Cys99.

The protein belongs to the eukaryotic/archaeal RNase P protein component 4 family. Consists of a catalytic RNA component and at least 4-5 protein subunits. Requires Zn(2+) as cofactor.

The protein resides in the cytoplasm. The catalysed reaction is Endonucleolytic cleavage of RNA, removing 5'-extranucleotides from tRNA precursor.. Its function is as follows. Part of ribonuclease P, a protein complex that generates mature tRNA molecules by cleaving their 5'-ends. The sequence is that of Ribonuclease P protein component 4 from Hyperthermus butylicus (strain DSM 5456 / JCM 9403 / PLM1-5).